The following is a 312-amino-acid chain: Aspartate carbamoyltransferase catalytic subunit (312 aa).

Carbamoyl phosphate-binding residues include R58 and T59. An L-aspartate-binding site is contributed by K86. R108, H136, and Q139 together coordinate carbamoyl phosphate. L-aspartate-binding residues include R169 and R223. Residues G264 and P265 each contribute to the carbamoyl phosphate site.

This sequence belongs to the aspartate/ornithine carbamoyltransferase superfamily. ATCase family. In terms of assembly, heterododecamer (2C3:3R2) of six catalytic PyrB chains organized as two trimers (C3), and six regulatory PyrI chains organized as three dimers (R2).

The catalysed reaction is carbamoyl phosphate + L-aspartate = N-carbamoyl-L-aspartate + phosphate + H(+). Its pathway is pyrimidine metabolism; UMP biosynthesis via de novo pathway; (S)-dihydroorotate from bicarbonate: step 2/3. Catalyzes the condensation of carbamoyl phosphate and aspartate to form carbamoyl aspartate and inorganic phosphate, the committed step in the de novo pyrimidine nucleotide biosynthesis pathway. This is Aspartate carbamoyltransferase catalytic subunit from Desulforapulum autotrophicum (strain ATCC 43914 / DSM 3382 / VKM B-1955 / HRM2) (Desulfobacterium autotrophicum).